The chain runs to 101 residues: Small ribosomal subunit protein uS14 (101 aa).

The protein belongs to the universal ribosomal protein uS14 family. In terms of assembly, part of the 30S ribosomal subunit. Contacts proteins S3 and S10.

Binds 16S rRNA, required for the assembly of 30S particles and may also be responsible for determining the conformation of the 16S rRNA at the A site. This chain is Small ribosomal subunit protein uS14, found in Methylibium petroleiphilum (strain ATCC BAA-1232 / LMG 22953 / PM1).